A 178-amino-acid polypeptide reads, in one-letter code: Hypoxanthine-guanine phosphoribosyltransferase (178 aa).

2 residues coordinate diphosphate: Lys46 and Gly47. Position 103 (Asp103) interacts with Mg(2+). Asp106 functions as the Proton acceptor in the catalytic mechanism. GMP contacts are provided by residues Lys134, 155-156, and Asp162; that span reads FL. Arg168 contacts diphosphate.

It belongs to the purine/pyrimidine phosphoribosyltransferase family. It depends on Mg(2+) as a cofactor.

It is found in the cytoplasm. It catalyses the reaction IMP + diphosphate = hypoxanthine + 5-phospho-alpha-D-ribose 1-diphosphate. It carries out the reaction GMP + diphosphate = guanine + 5-phospho-alpha-D-ribose 1-diphosphate. It participates in purine metabolism; IMP biosynthesis via salvage pathway; IMP from hypoxanthine: step 1/1. It functions in the pathway purine metabolism; GMP biosynthesis via salvage pathway; GMP from guanine: step 1/1. In terms of biological role, purine salvage pathway enzyme that catalyzes the transfer of the ribosyl-5-phosphate group from 5-phospho-alpha-D-ribose 1-diphosphate (PRPP) to the N9 position of the 6-oxopurines hypoxanthine and guanine to form the corresponding ribonucleotides IMP (inosine 5'-monophosphate) and GMP (guanosine 5'-monophosphate), with the release of PPi. This chain is Hypoxanthine-guanine phosphoribosyltransferase (hpt), found in Aquifex aeolicus (strain VF5).